The chain runs to 228 residues: Ribulose-phosphate 3-epimerase (228 aa).

Serine 9 provides a ligand contact to substrate. Histidine 34, aspartate 36, and histidine 70 together coordinate a divalent metal cation. Residue aspartate 36 is the Proton acceptor of the active site. Residues histidine 70, 146–149 (GKGG), 175–177 (DGG), and 197–198 (GT) contribute to the substrate site. Aspartate 175 is an a divalent metal cation binding site. Catalysis depends on aspartate 175, which acts as the Proton donor.

Belongs to the ribulose-phosphate 3-epimerase family. It depends on Co(2+) as a cofactor. The cofactor is Fe(2+). Mn(2+) is required as a cofactor. Zn(2+) serves as cofactor.

The catalysed reaction is D-ribulose 5-phosphate = D-xylulose 5-phosphate. It participates in carbohydrate degradation; pentose phosphate pathway; D-xylulose 5-phosphate from D-ribulose 5-phosphate (non-oxidative stage): step 1/1. Its function is as follows. Catalyzes the reversible epimerization of D-ribulose 5-phosphate to D-xylulose 5-phosphate. In Schizosaccharomyces pombe (strain 972 / ATCC 24843) (Fission yeast), this protein is Ribulose-phosphate 3-epimerase.